A 117-amino-acid chain; its full sequence is Large ribosomal subunit protein uL22 (117 aa).

It belongs to the universal ribosomal protein uL22 family. As to quaternary structure, part of the 50S ribosomal subunit.

In terms of biological role, this protein binds specifically to 23S rRNA; its binding is stimulated by other ribosomal proteins, e.g. L4, L17, and L20. It is important during the early stages of 50S assembly. It makes multiple contacts with different domains of the 23S rRNA in the assembled 50S subunit and ribosome. Functionally, the globular domain of the protein is located near the polypeptide exit tunnel on the outside of the subunit, while an extended beta-hairpin is found that lines the wall of the exit tunnel in the center of the 70S ribosome. The protein is Large ribosomal subunit protein uL22 of Lactobacillus gasseri (strain ATCC 33323 / DSM 20243 / BCRC 14619 / CIP 102991 / JCM 1131 / KCTC 3163 / NCIMB 11718 / NCTC 13722 / AM63).